Consider the following 504-residue polypeptide: Probable cytosol aminopeptidase (504 aa).

Mn(2+) is bound by residues Lys-274 and Asp-279. Lys-286 is a catalytic residue. Residues Asp-297, Asp-356, and Glu-358 each contribute to the Mn(2+) site. The active site involves Arg-360.

The protein belongs to the peptidase M17 family. It depends on Mn(2+) as a cofactor.

The protein resides in the cytoplasm. The enzyme catalyses Release of an N-terminal amino acid, Xaa-|-Yaa-, in which Xaa is preferably Leu, but may be other amino acids including Pro although not Arg or Lys, and Yaa may be Pro. Amino acid amides and methyl esters are also readily hydrolyzed, but rates on arylamides are exceedingly low.. The catalysed reaction is Release of an N-terminal amino acid, preferentially leucine, but not glutamic or aspartic acids.. Its function is as follows. Presumably involved in the processing and regular turnover of intracellular proteins. Catalyzes the removal of unsubstituted N-terminal amino acids from various peptides. The chain is Probable cytosol aminopeptidase from Gloeobacter violaceus (strain ATCC 29082 / PCC 7421).